Here is a 552-residue protein sequence, read N- to C-terminus: Cytochrome P450 97B1, chloroplastic (552 aa).

A chloroplast-targeting transit peptide spans 1–52 (MVAAPISTVKLTDANLHTRFHSSSSSTPSTLSLPLSLHFHFSSHSKRFSSIR). C528 serves as a coordination point for heme.

The protein belongs to the cytochrome P450 family. It depends on heme as a cofactor.

The protein resides in the plastid. The protein localises to the chloroplast membrane. In Pisum sativum (Garden pea), this protein is Cytochrome P450 97B1, chloroplastic (CYP97B1).